The sequence spans 573 residues: Mitochondrial distribution and morphology protein 34 (573 aa).

The 195-residue stretch at 1–195 (MAFNFNWSPL…LPAIIHRLSL (195 aa)) folds into the SMP-LTD domain. Disordered stretches follow at residues 301 to 326 (EGLGSGLMSPGSPALSRTHSHISSPL), 349 to 433 (FSGY…RFPN), 499 to 521 (SREKSMEAQSSHGPNPGLSITDA), and 550 to 573 (LVNNNYPGPWEQTRARTPPPAYGQ). Over residues 306–316 (GLMSPGSPALS) the composition is skewed to low complexity. Over residues 360–373 (RHTKARPTKKRKKR) the composition is skewed to basic residues. Residues 374–385 (VVDLRKQSKPTD) are compositionally biased toward basic and acidic residues. Low complexity predominate over residues 396 to 409 (TETSTASTTFSSST).

It belongs to the MDM34 family. In terms of assembly, component of the ER-mitochondria encounter structure (ERMES) or MDM complex, composed of MMM1, MDM10, MDM12 and MDM34.

It localises to the mitochondrion outer membrane. Its function is as follows. Component of the ERMES/MDM complex, which serves as a molecular tether to connect the endoplasmic reticulum (ER) and mitochondria. Components of this complex are involved in the control of mitochondrial shape and protein biogenesis, and function in nonvesicular lipid trafficking between the ER and mitochondria. MDM34 is required for the interaction of the ER-resident membrane protein MMM1 and the outer mitochondrial membrane-resident beta-barrel protein MDM10. The protein is Mitochondrial distribution and morphology protein 34 of Uncinocarpus reesii (strain UAMH 1704).